The chain runs to 245 residues: 8-amino-3,8-dideoxy-manno-octulosonate cytidylyltransferase (245 aa).

This sequence belongs to the KdsB family.

It is found in the cytoplasm. It catalyses the reaction 8-amino-3,8-dideoxy-alpha-D-manno-octulosonate + CTP = CMP-8-amino-3,8-dideoxy-alpha-D-manno-oct-2-ulosonate + diphosphate. It participates in bacterial outer membrane biogenesis; lipopolysaccharide biosynthesis. Activates KDO8N (a required 8-carbon sugar) for incorporation into bacterial lipopolysaccharide in the Shewanella genus. This Shewanella pealeana (strain ATCC 700345 / ANG-SQ1) protein is 8-amino-3,8-dideoxy-manno-octulosonate cytidylyltransferase.